A 68-amino-acid chain; its full sequence is U-actitoxin-Avt1 (68 aa).

The signal sequence occupies residues 1 to 22 (MNSKAIISVFLIMLVVVSCTQA). A propeptide spanning residues 23-40 (TYETEDDDEPGPRHSEKR) is cleaved from the precursor. The tract at residues 24-50 (YETEDDDEPGPRHSEKRSCARGCGGDS) is disordered. The segment covering 32-41 (PGPRHSEKRS) has biased composition (basic and acidic residues). Disulfide bonds link Cys42–Cys54, Cys46–Cys59, and Cys52–Cys66.

In terms of biological role, stable protein with probable toxin activity. Does not show activity on all channels tested. Shows no hemolytic activity on rat erythrocytes. The polypeptide is U-actitoxin-Avt1 (Aulactinia veratra (Green snakelock anemone)).